The chain runs to 425 residues: Putative chloroquine resistance transporter (425 aa).

Topologically, residues 1 to 56 (MTGIKKGKNKKKNMKNDDRYKELDSLITNGSEIGNNSGRSCVKRFFKIIGNEMKNN) are cytoplasmic. A helical transmembrane segment spans residues 57–77 (VYVYLLSILYLCVCVMNKVFA). At 78 to 88 (KRTLNKMGNYS) the chain is on the vacuolar side. The N-linked (GlcNAc...) asparagine glycan is linked to N86. The chain crosses the membrane as a helical span at residues 89–109 (FVTSETHNIICIIVFQLLYFI). The Cytoplasmic portion of the chain corresponds to 110–126 (YRKTSSSSVYKNESQKN). The chain crosses the membrane as a helical span at residues 127–147 (FGWQFFLISLLDASTVIISMI). Topologically, residues 148–157 (GLTRTTGNIQ) are vacuolar. The chain crosses the membrane as a helical span at residues 158 to 178 (SFIMQLIIPVNMYFWFMFLGY). The Cytoplasmic portion of the chain corresponds to 179 to 181 (RYH). Residues 182-202 (LFNYLGAFIILITIAVVETFL) form a helical membrane-spanning segment. Residues 203–210 (SFETQGEN) are Vacuolar-facing. Residues 211–231 (SIIFNLIMISAFNTLSFSNMT) traverse the membrane as a helical segment. The Cytoplasmic segment spans residues 232 to 249 (REVVFKKHKINILRLNAM). Residues 250-270 (VVLFQFFTSLLVLPVYNIPFL) traverse the membrane as a helical segment. Topologically, residues 271 to 318 (KEIYMPFSEMSTNINNGLRCLFYGENTIVENCGVGMVKMCDNCEGAWK) are vacuolar. Cystine bridges form between C290-C313 and C302-C310. A helical membrane pass occupies residues 319 to 339 (TFITFSFFNICDNLLACYIID). Topologically, residues 340 to 347 (KFSTMTYT) are cytoplasmic. A helical membrane pass occupies residues 348-368 (IVSCIQGPAITIAYYFKFLAG). The Vacuolar portion of the chain corresponds to 369 to 378 (DAVRKPRILD). Residues 379–399 (FLTLFGYLFGTIIYRIGNIIL) traverse the membrane as a helical segment. Residues 400–425 (EKKQVIKSQNSNDSEAELTSIETSRA) are Cytoplasmic-facing.

This sequence belongs to the CRT-like transporter family.

The protein resides in the vacuole membrane. In terms of biological role, nutrient transporter. Involved in maintaining the osmotic homeostasis of the digestive vacuole. The chain is Putative chloroquine resistance transporter from Plasmodium berghei.